Reading from the N-terminus, the 342-residue chain is Large ribosomal subunit protein uL10 (342 aa).

The interval 212–342 (EYIDMLQKAY…ALAGLSALFG (131 aa)) is required for interaction with ribosomal protein L12 dimers. The segment covering 299-308 (QAQVAVATQP) has biased composition (polar residues). A disordered region spans residues 299–342 (QAQVAVATQPSEEEKKEEEKTEEEEKEEEASEEEALAGLSALFG). Positions 318–333 (KTEEEEKEEEASEEEA) are enriched in acidic residues.

The protein belongs to the universal ribosomal protein uL10 family. Part of the 50S ribosomal subunit, binds large rRNA. Forms the ribosomal stalk which helps the ribosome interact with GTP-bound translation factors. Forms a heptameric L10(L12)2(L12)2(L12)2 complex, where L10 forms an elongated spine to which the L12 dimers bind in a sequential fashion.

Its function is as follows. Forms the large subunit's ribosomal stalk, playing a central role in the interaction of the ribosome with elongation factors; the stalk complex of P.horikoshii binds to E.coli large subunits and confers on them the ability to interact with eukaryotic elongation factors. Each succesive L12 dimer bound along the P0 spine increases the GTPase activity of elongation factors and increases translation by reconsituted ribosomes, although the first site is the most stimulatory. The protein is Large ribosomal subunit protein uL10 of Pyrococcus horikoshii (strain ATCC 700860 / DSM 12428 / JCM 9974 / NBRC 100139 / OT-3).